Reading from the N-terminus, the 222-residue chain is Peptide methionine sulfoxide reductase MsrA (222 aa).

Cysteine 54 is an active-site residue.

The protein belongs to the MsrA Met sulfoxide reductase family.

The enzyme catalyses L-methionyl-[protein] + [thioredoxin]-disulfide + H2O = L-methionyl-(S)-S-oxide-[protein] + [thioredoxin]-dithiol. It catalyses the reaction [thioredoxin]-disulfide + L-methionine + H2O = L-methionine (S)-S-oxide + [thioredoxin]-dithiol. Has an important function as a repair enzyme for proteins that have been inactivated by oxidation. Catalyzes the reversible oxidation-reduction of methionine sulfoxide in proteins to methionine. The sequence is that of Peptide methionine sulfoxide reductase MsrA from Methylococcus capsulatus (strain ATCC 33009 / NCIMB 11132 / Bath).